A 231-amino-acid chain; its full sequence is Ribose-5-phosphate isomerase A (231 aa).

Substrate-binding positions include 32 to 35 (TGST), 85 to 88 (DGAD), and 98 to 101 (KGGG). Glu-107 acts as the Proton acceptor in catalysis. Lys-125 lines the substrate pocket.

This sequence belongs to the ribose 5-phosphate isomerase family. In terms of assembly, homodimer.

The catalysed reaction is aldehydo-D-ribose 5-phosphate = D-ribulose 5-phosphate. Its pathway is carbohydrate degradation; pentose phosphate pathway; D-ribose 5-phosphate from D-ribulose 5-phosphate (non-oxidative stage): step 1/1. Its function is as follows. Catalyzes the reversible conversion of ribose-5-phosphate to ribulose 5-phosphate. This is Ribose-5-phosphate isomerase A from Burkholderia mallei (strain NCTC 10247).